A 96-amino-acid chain; its full sequence is UPF0235 protein YPN_3141 (96 aa).

It belongs to the UPF0235 family.

In Yersinia pestis bv. Antiqua (strain Nepal516), this protein is UPF0235 protein YPN_3141.